Consider the following 1978-residue polypeptide: Protein MOR1 (1978 aa).

2 HEAT repeats span residues 48-86 and 165-202; these read DPRL…AADS and IPPK…WIGK. The tract at residues 230 to 264 is disordered; the sequence is AGAKPTRKIRSEQDKEPEAEASSDVVGDGPSEEAV. The segment covering 238–247 has biased composition (basic and acidic residues); it reads IRSEQDKEPE. 3 HEAT repeats span residues 322-359, 363-400, and 442-479; these read GDFS…GLRT, ASSR…AGCL, and KAHK…SVGM. The segment at 501-587 is disordered; that stretch reads IAGSGGGDQA…SVEPPEDVEP (87 aa). Over residues 510-527 the composition is skewed to low complexity; sequence AGTSSVTVQSSVGSTATG. The segment covering 565 to 577 has biased composition (basic and acidic residues); sequence GKKDGSVRNEGSK. HEAT repeat units follow at residues 849–886, 890–928, 932–969, and 1008–1045; these read DIST…EANK, PTGT…AMGP, KASK…AVHL, and VDAI…VSGQ. A disordered region spans residues 1087–1115; that stretch reads SKGVTKISKSTSNGTLKQGNRSRAVPTKG. Over residues 1093 to 1107 the composition is skewed to polar residues; sequence ISKSTSNGTLKQGNR. HEAT repeat units follow at residues 1230–1253, 1254–1286, 1287–1325, and 1328–1365; these read LKVL…MTEA, EAAI…QIIQ, AYSV…TCGT, and GGLL…ILGA. Positions 1393 to 1403 are enriched in basic and acidic residues; it reads MEKRREGKPGE. Positions 1393–1431 are disordered; sequence MEKRREGKPGEARAALRRSVRDSGPEVAEQSGDISQTVP. An HEAT 14 repeat occupies 1535-1575; that stretch reads RSCKYVLNTLMQTFQNKKLAHAVKEGTLESLITELLLWLLD. A disordered region spans residues 1837 to 1862; the sequence is AAAGRTPSSLPLSTPPPSSLALPSPD.

The protein belongs to the TOG/XMAP215 family. In terms of tissue distribution, expressed in roots, cotyledons, rosette leaves, stems, open flowers and green siliques.

It localises to the cytoplasm. It is found in the cytoskeleton. Its subcellular location is the phragmoplast. The protein localises to the spindle. In terms of biological role, microtubule-binding protein that is essential for cortical microtubules organization and function. Essential for maintaining the interphase cortical array and for correct morphogenesis. Promotes rapid growth and shrinkage of microtubules and suppresses the pausing of interphase microtubules. Regulates the structure and function of microtubule arrays during mitosis and cytokinesis. Probably not required for cellulose microfibrils alignment in roots. The polypeptide is Protein MOR1 (MOR1) (Arabidopsis thaliana (Mouse-ear cress)).